Consider the following 479-residue polypeptide: Fibrinogen beta chain (479 aa).

An N-terminal signal peptide occupies residues 1-18 (MRHLWLLLLSVSLVQTQA). A disordered region spans residues 20-82 (TTDSDKVDLS…VERKPPDAGG (63 aa)). The segment at 33–35 (GHR) is beta-chain polymerization, binding distal domain of another fibrin. Composition is skewed to basic and acidic residues over residues 35 to 45 (RPVDRRKEEPP) and 64 to 78 (AKVDAGQKKVERKPP). 2 disulfide bridges follow: Cys219-Cys304 and Cys229-Cys258. Residues 220–476 (NIPVVSGKEC…RMSMKIRPVF (257 aa)) enclose the Fibrinogen C-terminal domain. Residue Asn382 is glycosylated (N-linked (GlcNAc...) asparagine). Residues Cys412 and Cys425 are joined by a disulfide bond.

In terms of assembly, heterohexamer; disulfide linked. Contains 2 sets of 3 non-identical chains (alpha, beta and gamma). The 2 heterotrimers are in head to head conformation with the N-termini in a small central domain. In terms of processing, conversion of fibrinogen to fibrin is triggered by thrombin, which cleaves fibrinopeptides A and B from alpha and beta chains, and thus exposes the N-terminal polymerization sites responsible for the formation of the soft clot.

The protein localises to the secreted. In terms of biological role, cleaved by the protease thrombin to yield monomers which, together with fibrinogen alpha (FGA) and fibrinogen gamma (FGG), polymerize to form an insoluble fibrin matrix. Fibrin has a major function in hemostasis as one of the primary components of blood clots. In addition, functions during the early stages of wound repair to stabilize the lesion and guide cell migration during re-epithelialization. Was originally thought to be essential for platelet aggregation, based on in vitro studies using anticoagulated blood. However subsequent studies have shown that it is not absolutely required for thrombus formation in vivo. Enhances expression of SELP in activated platelets. Maternal fibrinogen is essential for successful pregnancy. Fibrin deposition is also associated with infection, where it protects against IFNG-mediated hemorrhage. May also facilitate the antibacterial immune response via both innate and T-cell mediated pathways. In Rattus norvegicus (Rat), this protein is Fibrinogen beta chain (Fgb).